We begin with the raw amino-acid sequence, 208 residues long: Small ribosomal subunit protein uS4 (208 aa).

One can recognise an S4 RNA-binding domain in the interval 98-159 (RRLDNVIYRL…KSRTVAVITN (62 aa)).

This sequence belongs to the universal ribosomal protein uS4 family. In terms of assembly, part of the 30S ribosomal subunit. Contacts protein S5. The interaction surface between S4 and S5 is involved in control of translational fidelity.

In terms of biological role, one of the primary rRNA binding proteins, it binds directly to 16S rRNA where it nucleates assembly of the body of the 30S subunit. With S5 and S12 plays an important role in translational accuracy. The protein is Small ribosomal subunit protein uS4 of Desulfatibacillum aliphaticivorans.